The following is a 379-amino-acid chain: MPTVFPHDSVGLVTPQTAHFSEPLALACGRSLPAYDLIYETYGQLNAARSNAVLICHALSGHHHAAGFHSADDRKPGWWDSCIGPGKPIDTNTFFVVSLNNLGGCNGSTGPSSIDPDTGKPLGANFPVVTVEDWVNSQARLADLLGIDTWAAVIGGSLGGMQALQWTISYPDRVRHCLAIASAPKLSAQNIAFNEVARQAILTDPEFHGGSFQERGVIPKRGLMLARMVGHITYLSDDSMGEKFGRGLKSEKLNYDFHSVEFQVESYLRYQGEEFSGRFDANTYLLMTKALDYFDPAANFNDDLAKTFANATAKFCVMSFTTDWRFSPARSRELVDALMAARKDVCYLEIDAPQGHDAFLIPIPRYLQAFGNYMNRISL.

Positions 51-360 (NAVLICHALS…DAPQGHDAFL (310 aa)) constitute an AB hydrolase-1 domain. The active-site Nucleophile is Ser-157. Residue Arg-227 participates in substrate binding. Active-site residues include Asp-323 and His-356. Asp-357 serves as a coordination point for substrate.

The protein belongs to the AB hydrolase superfamily. MetX family. Homodimer.

The protein resides in the cytoplasm. It catalyses the reaction L-homoserine + succinyl-CoA = O-succinyl-L-homoserine + CoA. Its pathway is amino-acid biosynthesis; L-methionine biosynthesis via de novo pathway; O-succinyl-L-homoserine from L-homoserine: step 1/1. Transfers a succinyl group from succinyl-CoA to L-homoserine, forming succinyl-L-homoserine. The polypeptide is Homoserine O-succinyltransferase (Pseudomonas savastanoi pv. phaseolicola (strain 1448A / Race 6) (Pseudomonas syringae pv. phaseolicola (strain 1448A / Race 6))).